A 318-amino-acid polypeptide reads, in one-letter code: Tyrosine recombinase XerC (318 aa).

Residues Pro17–Glu108 enclose the Core-binding (CB) domain. The Tyr recombinase domain occupies Ser129–Asp312. Residues Arg172, Lys196, His264, Arg267, and His290 contribute to the active site. Tyr299 acts as the O-(3'-phospho-DNA)-tyrosine intermediate in catalysis.

The protein belongs to the 'phage' integrase family. XerC subfamily. Forms a cyclic heterotetrameric complex composed of two molecules of XerC and two molecules of XerD.

It localises to the cytoplasm. In terms of biological role, site-specific tyrosine recombinase, which acts by catalyzing the cutting and rejoining of the recombining DNA molecules. The XerC-XerD complex is essential to convert dimers of the bacterial chromosome into monomers to permit their segregation at cell division. It also contributes to the segregational stability of plasmids. The chain is Tyrosine recombinase XerC from Rhizobium meliloti (strain 1021) (Ensifer meliloti).